The sequence spans 199 residues: MQYPEPIARLIDSYMKLPGIGEKSATRLAFYTLGMSDADVDNFAKSLRAVKRDLHYCSVCGNITEDDPCPICKDKTRDQSRVLVVERSRDIMAMERMKEYHGLYHVLHGTISPSEGTGPQDINLESLLKRLEAHKEIQEVIVATNASLDGETTAQYLAHLIKPAGIKVTRLAHGLSAGADIDYTDEVTLFRAVQGRTEM.

A C4-type zinc finger spans residues 57–72; the sequence is CSVCGNITEDDPCPIC. Positions 80 to 176 constitute a Toprim domain; sequence SRVLVVERSR…KVTRLAHGLS (97 aa).

This sequence belongs to the RecR family.

May play a role in DNA repair. It seems to be involved in an RecBC-independent recombinational process of DNA repair. It may act with RecF and RecO. In Limosilactobacillus fermentum (strain NBRC 3956 / LMG 18251) (Lactobacillus fermentum), this protein is Recombination protein RecR.